We begin with the raw amino-acid sequence, 255 residues long: 5-oxoprolinase subunit A (255 aa).

The protein belongs to the LamB/PxpA family. As to quaternary structure, forms a complex composed of PxpA, PxpB and PxpC.

The catalysed reaction is 5-oxo-L-proline + ATP + 2 H2O = L-glutamate + ADP + phosphate + H(+). Its function is as follows. Catalyzes the cleavage of 5-oxoproline to form L-glutamate coupled to the hydrolysis of ATP to ADP and inorganic phosphate. The polypeptide is 5-oxoprolinase subunit A (Clostridium kluyveri (strain ATCC 8527 / DSM 555 / NBRC 12016 / NCIMB 10680 / K1)).